We begin with the raw amino-acid sequence, 483 residues long: Protein nucleotidyltransferase YdiU (483 aa).

8 residues coordinate ATP: Gly87, Gly89, Arg90, Lys110, Asp122, Gly123, Arg173, and Arg180. Residue Asp249 is the Proton acceptor of the active site. 2 residues coordinate Mg(2+): Asn250 and Asp259. Asp259 provides a ligand contact to ATP.

This sequence belongs to the SELO family. Mg(2+) serves as cofactor. Mn(2+) is required as a cofactor.

The catalysed reaction is L-seryl-[protein] + ATP = 3-O-(5'-adenylyl)-L-seryl-[protein] + diphosphate. It catalyses the reaction L-threonyl-[protein] + ATP = 3-O-(5'-adenylyl)-L-threonyl-[protein] + diphosphate. It carries out the reaction L-tyrosyl-[protein] + ATP = O-(5'-adenylyl)-L-tyrosyl-[protein] + diphosphate. The enzyme catalyses L-histidyl-[protein] + UTP = N(tele)-(5'-uridylyl)-L-histidyl-[protein] + diphosphate. The catalysed reaction is L-seryl-[protein] + UTP = O-(5'-uridylyl)-L-seryl-[protein] + diphosphate. It catalyses the reaction L-tyrosyl-[protein] + UTP = O-(5'-uridylyl)-L-tyrosyl-[protein] + diphosphate. Functionally, nucleotidyltransferase involved in the post-translational modification of proteins. It can catalyze the addition of adenosine monophosphate (AMP) or uridine monophosphate (UMP) to a protein, resulting in modifications known as AMPylation and UMPylation. The protein is Protein nucleotidyltransferase YdiU of Pectobacterium atrosepticum (strain SCRI 1043 / ATCC BAA-672) (Erwinia carotovora subsp. atroseptica).